Reading from the N-terminus, the 153-residue chain is 6,7-dimethyl-8-ribityllumazine synthase (153 aa).

Residues phenylalanine 22, 56 to 58 (AFE), and 80 to 82 (AVI) contribute to the 5-amino-6-(D-ribitylamino)uracil site. Residue 85-86 (ST) participates in (2S)-2-hydroxy-3-oxobutyl phosphate binding. Catalysis depends on histidine 88, which acts as the Proton donor. Phenylalanine 113 is a binding site for 5-amino-6-(D-ribitylamino)uracil. Arginine 127 is a (2S)-2-hydroxy-3-oxobutyl phosphate binding site.

It belongs to the DMRL synthase family.

It catalyses the reaction (2S)-2-hydroxy-3-oxobutyl phosphate + 5-amino-6-(D-ribitylamino)uracil = 6,7-dimethyl-8-(1-D-ribityl)lumazine + phosphate + 2 H2O + H(+). The protein operates within cofactor biosynthesis; riboflavin biosynthesis; riboflavin from 2-hydroxy-3-oxobutyl phosphate and 5-amino-6-(D-ribitylamino)uracil: step 1/2. Functionally, catalyzes the formation of 6,7-dimethyl-8-ribityllumazine by condensation of 5-amino-6-(D-ribitylamino)uracil with 3,4-dihydroxy-2-butanone 4-phosphate. This is the penultimate step in the biosynthesis of riboflavin. This Clostridium botulinum (strain Alaska E43 / Type E3) protein is 6,7-dimethyl-8-ribityllumazine synthase.